The chain runs to 1339 residues: Aldehyde oxidase 1 (1339 aa).

Residues 5–92 (SELLFYVNGR…GAAVTTVEGI (88 aa)) enclose the 2Fe-2S ferredoxin-type domain. Residues C44, C49, C52, and C74 each coordinate [2Fe-2S] cluster. Q113 is a binding site for Mo-molybdopterin. [2Fe-2S] cluster contacts are provided by C114, C117, C149, and C151. C151 is a Mo-molybdopterin binding site. The 186-residue stretch at 236–421 (FGSDRMTWIS…ISVNIPYSRK (186 aa)) folds into the FAD-binding PCMH-type domain. FAD contacts are provided by residues 264-271 (VVMGNTSV), A345, S354, H358, D367, and L411. Mo-molybdopterin-binding positions include 807 to 808 (AF) and M1048. S1069 bears the Phosphoserine mark. Residues 1089-1092 (GSVV), Q1204, and L1269 contribute to the Mo-molybdopterin site. E1271 functions as the Proton acceptor; for azaheterocycle hydroxylase activity in the catalytic mechanism.

Belongs to the xanthine dehydrogenase family. As to quaternary structure, homodimer. [2Fe-2S] cluster is required as a cofactor. It depends on FAD as a cofactor. Requires Mo-molybdopterin as cofactor. The N-terminus is blocked. As to expression, expressed at high levels in liver, lung and spleen. Also expressed in kindey, eye, testis, duodenum, esophagus and thymus (at protein level).

The protein localises to the cytoplasm. The catalysed reaction is an aldehyde + O2 + H2O = a carboxylate + H2O2 + H(+). The enzyme catalyses retinal + O2 + H2O = retinoate + H2O2 + H(+). Its function is as follows. Oxidase with broad substrate specificity, oxidizing aromatic azaheterocycles, such as N1-methylnicotinamide, N-methylphthalazinium and phthalazine, as well as aldehydes, such as benzaldehyde, retinal, pyridoxal, and vanillin. Plays a key role in the metabolism of xenobiotics and drugs containing aromatic azaheterocyclic substituents. Is probably involved in the regulation of reactive oxygen species homeostasis. May be a prominent source of superoxide generation via the one-electron reduction of molecular oxygen. May also catalyze nitric oxide (NO) production via the reduction of nitrite to NO with NADH or aldehyde as electron donor. May play a role in adipogenesis. In Bos taurus (Bovine), this protein is Aldehyde oxidase 1.